The chain runs to 300 residues: Cation-efflux pump FieF (300 aa).

4 consecutive transmembrane segments (helical) span residues 12 to 32 (AAIA…FAWW), 39 to 59 (ILAA…NLLV), 82 to 102 (AALA…LTSI), and 114 to 134 (PGVG…LVTF). The Zn(2+) site is built by aspartate 45 and aspartate 49. Residues histidine 153 and aspartate 157 each coordinate Zn(2+). 2 helical membrane passes run 156–176 (SDVM…YGWH) and 178–198 (ADAL…LRMG).

It belongs to the cation diffusion facilitator (CDF) transporter (TC 2.A.4) family. FieF subfamily. Homodimer.

It is found in the cell inner membrane. The catalysed reaction is Zn(2+)(in) + H(+)(out) = Zn(2+)(out) + H(+)(in). The enzyme catalyses Cd(2+)(in) + H(+)(out) = Cd(2+)(out) + H(+)(in). It carries out the reaction Fe(2+)(in) + H(+)(out) = Fe(2+)(out) + H(+)(in). Its function is as follows. Divalent metal cation transporter which exports Zn(2+), Cd(2+) and possibly Fe(2+). May be involved in zinc and iron detoxification by efflux. The polypeptide is Cation-efflux pump FieF (Salmonella arizonae (strain ATCC BAA-731 / CDC346-86 / RSK2980)).